The following is a 580-amino-acid chain: MEIQFSYESQDHHFLSDGETKIKIGEPATEEEMTGKIGTVTEESGSLEEDVPHDSRGKEFREFGEELNDQMLFRRRQYNCDECDQSFAWSTGLIRHQRTHWKPYECEECGKAFRMSSALVLHQRIHTGEKPYPCSWCIKSFSRSSDLIKHQRVHTGEKPYKCDECGKAFSQSSDLMIHQRIHTGEKPYQCSHCSKSFSQHSGMVKHLRIHTGEKPYMCNHCYKHFSQSSDLIKHQRIHTGEKPYKCDVCGKAFSQSSDRILHQRIHTGEKPYPCAQCNKSFSQNSDLIKHRRIHTGEKPYKCSECGKAFNQSSVLILHQRIHTGEKPYPCNQCTKSFSRLSDLINHQRIHTGEKPYPCSQCSKMFSRRSDLVKHYRIHTGEKPYECDKCGKTFSQSSNLILHQRIHTGEKPYPCNSCSKSFSRGSDLIKHQRVHTGEKPYTCNLCSKSFSQSSDLTKHQRVHSGEKPYHCSSCNKAFRQSSDLILHHRVHTGERPYACTQCPRSFSQKSDLIKHQRIHTGEKPYKCMCGKAFSQCSAFTLHQRIHTGEKPYPCAQCGKSFSQRSDLVNHQRVHADQKLQM.

C2H2-type zinc fingers lie at residues 78-100, 104-126, 132-154, 160-182, 188-210, 216-238, 244-266, 272-294, 300-322, 328-350, 356-378, 384-406, 412-434, 440-462, 468-490, 496-518, 524-545, and 551-573; these read YNCDECDQSFAWSTGLIRHQRTH, YECEECGKAFRMSSALVLHQRIH, YPCSWCIKSFSRSSDLIKHQRVH, YKCDECGKAFSQSSDLMIHQRIH, YQCSHCSKSFSQHSGMVKHLRIH, YMCNHCYKHFSQSSDLIKHQRIH, YKCDVCGKAFSQSSDRILHQRIH, YPCAQCNKSFSQNSDLIKHRRIH, YKCSECGKAFNQSSVLILHQRIH, YPCNQCTKSFSRLSDLINHQRIH, YPCSQCSKMFSRRSDLVKHYRIH, YECDKCGKTFSQSSNLILHQRIH, YPCNSCSKSFSRGSDLIKHQRVH, YTCNLCSKSFSQSSDLTKHQRVH, YHCSSCNKAFRQSSDLILHHRVH, YACTQCPRSFSQKSDLIKHQRIH, YKCMCGKAFSQCSAFTLHQRIH, and YPCAQCGKSFSQRSDLVNHQRVH.

Belongs to the krueppel C2H2-type zinc-finger protein family. Selectively expressed in adult testis.

The protein localises to the nucleus. Its function is as follows. May act to control gene activity during the pachytene stage of meiotic prophase. May function as a transcription activator. The polypeptide is Zinc finger protein 271 (Znf271) (Mus musculus (Mouse)).